A 150-amino-acid polypeptide reads, in one-letter code: Retinal rod rhodopsin-sensitive cGMP 3',5'-cyclic phosphodiesterase subunit delta (150 aa).

Residues 144 to 150 are required for association with membranes; sequence RVRLFYV.

The protein belongs to the PDE6D/unc-119 family. As to quaternary structure, interacts with the prenylated catalytic subunits of PDE6, an oligomer composed of two catalytic chains (PDE6A and PDE6B) and two inhibitory chains (gamma); has no effect on enzyme activity but promotes the release of the prenylated enzyme from cell membrane. Interacts with prenylated GRK1 and GRK7. Interacts with prenylated INPP5E. Interacts with prenylated Ras family members, including HRAS, KRAS, NRAS, RAP2A, RAP2C and RHEB. Interacts with RAB13 (prenylated form); dissociates RAB13 from membranes. Interacts with RAB28 (prenylated form); the interaction promotes RAB28 delivery to the photoreceptor outer segments. Interacts with RPGR. Interacts with ARL2. Interacts with ARL3; the interaction occurs specifically with the GTP-bound form of ARL3. Interaction with ARL2 and ARL3 promotes release of farnesylated cargo proteins. Detected in retina photoreceptor cells, especially in rods (at protein level). Detected in retina, brain and adrenal gland.

It localises to the cytoplasm. It is found in the cytosol. The protein localises to the cytoplasmic vesicle membrane. Its subcellular location is the cytoskeleton. The protein resides in the cilium basal body. In terms of biological role, promotes the release of prenylated target proteins from cellular membranes. Modulates the activity of prenylated or palmitoylated Ras family members by regulating their subcellular location. Required for normal ciliary targeting of farnesylated target proteins, such as INPP5E. Modulates the subcellular location of target proteins by acting as a GTP specific dissociation inhibitor (GDI). Required for RAB28 localization to the cone cell outer segments in the retina. Increases the affinity of ARL3 for GTP by several orders of magnitude. Stabilizes ARL3-GTP by decreasing the nucleotide dissociation rate. The sequence is that of Retinal rod rhodopsin-sensitive cGMP 3',5'-cyclic phosphodiesterase subunit delta (PDE6D) from Bos taurus (Bovine).